A 190-amino-acid polypeptide reads, in one-letter code: MTVRLLLASASPRRRELLSQIGVAFEVKPSAFEERMDPALPPEQLVVQNALGKALNVQKRAPAELILGADTVVVFNRRIYGKPTGPADAGRMLGELQGQWHTVYTGIALVEERRWRVAERATRVKLRAMTPAQIAAYVAGGEPLDKAGSYAIQGLGAALVEQIDGCYSNVVGLSLPLLVDLLAEFDRRVF.

Asp-70 acts as the Proton acceptor in catalysis.

The protein belongs to the Maf family. YhdE subfamily. Requires a divalent metal cation as cofactor.

The protein localises to the cytoplasm. It catalyses the reaction dTTP + H2O = dTMP + diphosphate + H(+). It carries out the reaction UTP + H2O = UMP + diphosphate + H(+). Nucleoside triphosphate pyrophosphatase that hydrolyzes dTTP and UTP. May have a dual role in cell division arrest and in preventing the incorporation of modified nucleotides into cellular nucleic acids. This Gloeobacter violaceus (strain ATCC 29082 / PCC 7421) protein is dTTP/UTP pyrophosphatase.